We begin with the raw amino-acid sequence, 559 residues long: Fanconi-associated nuclease 1 homolog (559 aa).

Mn(2+) is bound by residues E386, D507, E522, and V523. The region spanning 443 to 555 (DGSYRDAIRC…MPVAVCYVRW (113 aa)) is the VRR-NUC domain.

Belongs to the FAN1 family. Mn(2+) is required as a cofactor. It depends on Mg(2+) as a cofactor.

The enzyme catalyses Hydrolytically removes 5'-nucleotides successively from the 3'-hydroxy termini of 3'-hydroxy-terminated oligonucleotides.. Its function is as follows. Nuclease required for the repair of DNA interstrand cross-links (ICL). Acts as a 5'-3' exonuclease that anchors at a cut end of DNA and cleaves DNA successively at every third nucleotide, allowing to excise an ICL from one strand through flanking incisions. Also has endonuclease activity toward 5'-flaps. In Pseudomonas aeruginosa (strain ATCC 15692 / DSM 22644 / CIP 104116 / JCM 14847 / LMG 12228 / 1C / PRS 101 / PAO1), this protein is Fanconi-associated nuclease 1 homolog.